We begin with the raw amino-acid sequence, 378 residues long: Anhydro-N-acetylmuramic acid kinase 2 (378 aa).

ATP is bound at residue 14 to 22 (GTVLDGNID).

This sequence belongs to the anhydro-N-acetylmuramic acid kinase family.

The catalysed reaction is 1,6-anhydro-N-acetyl-beta-muramate + ATP + H2O = N-acetyl-D-muramate 6-phosphate + ADP + H(+). Its pathway is amino-sugar metabolism; 1,6-anhydro-N-acetylmuramate degradation. It functions in the pathway cell wall biogenesis; peptidoglycan recycling. In terms of biological role, catalyzes the specific phosphorylation of 1,6-anhydro-N-acetylmuramic acid (anhMurNAc) with the simultaneous cleavage of the 1,6-anhydro ring, generating MurNAc-6-P. Is required for the utilization of anhMurNAc either imported from the medium or derived from its own cell wall murein, and thus plays a role in cell wall recycling. This chain is Anhydro-N-acetylmuramic acid kinase 2, found in Jannaschia sp. (strain CCS1).